An 88-amino-acid chain; its full sequence is Small ribosomal subunit protein uS15 (88 aa).

The protein belongs to the universal ribosomal protein uS15 family. As to quaternary structure, part of the 30S ribosomal subunit. Forms a bridge to the 50S subunit in the 70S ribosome, contacting the 23S rRNA.

One of the primary rRNA binding proteins, it binds directly to 16S rRNA where it helps nucleate assembly of the platform of the 30S subunit by binding and bridging several RNA helices of the 16S rRNA. Its function is as follows. Forms an intersubunit bridge (bridge B4) with the 23S rRNA of the 50S subunit in the ribosome. This is Small ribosomal subunit protein uS15 from Trichlorobacter lovleyi (strain ATCC BAA-1151 / DSM 17278 / SZ) (Geobacter lovleyi).